The following is a 475-amino-acid chain: MNTALAQQIANEGGVEAWMIAQQHKSLLRFLTCGSVDDGKSTLIGRLLHDTRQIYEDQLSSLHNDSKRHGTQGEKLDLALLVDGLQAEREQGITIDVAYRYFSTEKRKFIIADTPGHEQYTRNMATGASTCELAILLIDARKGVLDQTRRHSFISTLLGIKHLVVAINKMDLVDYSEETFTRIREDYLTFAGQLPGNLDIRFVPLSALEGDNVASQSESMPWYSGPTLLEVLETVEIQRVVDAQPMRFPVQYVNRPNLDFRGYAGTLASGRVEVGQRVKVLPSGVESNVARIVTFDGDREEAFAGEAITLVLTDEIDISRGDLLLAADEALPAVQSASVDVVWMAEQPLSPGQSYDIKIAGKKTRARVDGIRYQVDINNLTQREVENLPLNGIGLVDLTFDEPLVLDRYQQNPVTGGLIFIDRLSNVTVGAGMVHEPVSQATAAPSEFSVFELELNALVRRHFPHWGARDLLGDK.

The tr-type G domain maps to 25-239; it reads KSLLRFLTCG…EVLETVEIQR (215 aa). The tract at residues 34–41 is G1; the sequence is GSVDDGKS. 34 to 41 contributes to the GTP binding site; the sequence is GSVDDGKS. A G2 region spans residues 92 to 96; the sequence is GITID. The interval 113–116 is G3; that stretch reads DTPG. Residues 113-117 and 168-171 each bind GTP; these read DTPGH and NKMD. The segment at 168–171 is G4; that stretch reads NKMD. The G5 stretch occupies residues 206–208; that stretch reads SAL.

This sequence belongs to the TRAFAC class translation factor GTPase superfamily. Classic translation factor GTPase family. CysN/NodQ subfamily. Heterodimer composed of CysD, the smaller subunit, and CysN.

It carries out the reaction sulfate + ATP + H(+) = adenosine 5'-phosphosulfate + diphosphate. It participates in sulfur metabolism; hydrogen sulfide biosynthesis; sulfite from sulfate: step 1/3. With CysD forms the ATP sulfurylase (ATPS) that catalyzes the adenylation of sulfate producing adenosine 5'-phosphosulfate (APS) and diphosphate, the first enzymatic step in sulfur assimilation pathway. APS synthesis involves the formation of a high-energy phosphoric-sulfuric acid anhydride bond driven by GTP hydrolysis by CysN coupled to ATP hydrolysis by CysD. This chain is Sulfate adenylyltransferase subunit 1, found in Escherichia coli O9:H4 (strain HS).